A 279-amino-acid polypeptide reads, in one-letter code: Shikimate dehydrogenase (NADP(+)) (279 aa).

Residues 20–22 (SRS) and Thr67 each bind shikimate. Catalysis depends on Lys71, which acts as the Proton acceptor. Asp83 contributes to the NADP(+) binding site. Residues Asn92 and Asp108 each contribute to the shikimate site. NADP(+)-binding positions include 134-138 (GAGGA) and Leu223. Shikimate is bound at residue Tyr225. Position 246 (Gly246) interacts with NADP(+).

The protein belongs to the shikimate dehydrogenase family. In terms of assembly, homodimer.

The catalysed reaction is shikimate + NADP(+) = 3-dehydroshikimate + NADPH + H(+). It participates in metabolic intermediate biosynthesis; chorismate biosynthesis; chorismate from D-erythrose 4-phosphate and phosphoenolpyruvate: step 4/7. Involved in the biosynthesis of the chorismate, which leads to the biosynthesis of aromatic amino acids. Catalyzes the reversible NADPH linked reduction of 3-dehydroshikimate (DHSA) to yield shikimate (SA). This is Shikimate dehydrogenase (NADP(+)) from Cereibacter sphaeroides (strain ATCC 17023 / DSM 158 / JCM 6121 / CCUG 31486 / LMG 2827 / NBRC 12203 / NCIMB 8253 / ATH 2.4.1.) (Rhodobacter sphaeroides).